Consider the following 242-residue polypeptide: Proteasome subunit alpha (242 aa).

The protein belongs to the peptidase T1A family. In terms of assembly, the 20S proteasome core is composed of 14 alpha and 14 beta subunits that assemble into four stacked heptameric rings, resulting in a barrel-shaped structure. The two inner rings, each composed of seven catalytic beta subunits, are sandwiched by two outer rings, each composed of seven alpha subunits. The catalytic chamber with the active sites is on the inside of the barrel. Has a gated structure, the ends of the cylinder being occluded by the N-termini of the alpha-subunits. Is capped at one or both ends by the proteasome regulatory ATPase, PAN.

The protein resides in the cytoplasm. Its activity is regulated as follows. The formation of the proteasomal ATPase PAN-20S proteasome complex, via the docking of the C-termini of PAN into the intersubunit pockets in the alpha-rings, triggers opening of the gate for substrate entry. Interconversion between the open-gate and close-gate conformations leads to a dynamic regulation of the 20S proteasome proteolysis activity. Functionally, component of the proteasome core, a large protease complex with broad specificity involved in protein degradation. The sequence is that of Proteasome subunit alpha from Sulfolobus acidocaldarius (strain ATCC 33909 / DSM 639 / JCM 8929 / NBRC 15157 / NCIMB 11770).